The primary structure comprises 270 residues: MKRSDRYKTYNKPNDSNDSNQLHHNTYFKPVNKPQKKKKGKGIILKLLIPILIIIGIIIGVMYALSLRADTDELKNITEKESFVYASDMRDYTKGAFIAMEDERFYKHHGFDVKGTSRALFSTLSDKSVQGGSTITQQVVKNYYYDNEQSITRKIKELFVAHRVEKEYDKNEILSFYMNNIYYGSDQYTIESAANHYFGVTTDKNNPNLPQISVLQSAILASKINAPSVYNINDMSDNFTNRVKTDLEKMKQQGYISNSQYENAIQELGV.

The segment at methionine 1–glutamine 35 is disordered. The segment covering asparagine 11–histidine 24 has biased composition (polar residues). A helical transmembrane segment spans residues leucine 47–leucine 67.

This sequence belongs to the glycosyltransferase 51 family.

The protein resides in the cell membrane. It carries out the reaction [GlcNAc-(1-&gt;4)-Mur2Ac(oyl-L-Ala-gamma-D-Glu-L-Lys-D-Ala-D-Ala)](n)-di-trans,octa-cis-undecaprenyl diphosphate + beta-D-GlcNAc-(1-&gt;4)-Mur2Ac(oyl-L-Ala-gamma-D-Glu-L-Lys-D-Ala-D-Ala)-di-trans,octa-cis-undecaprenyl diphosphate = [GlcNAc-(1-&gt;4)-Mur2Ac(oyl-L-Ala-gamma-D-Glu-L-Lys-D-Ala-D-Ala)](n+1)-di-trans,octa-cis-undecaprenyl diphosphate + di-trans,octa-cis-undecaprenyl diphosphate + H(+). The protein operates within cell wall biogenesis; peptidoglycan biosynthesis. Its function is as follows. Peptidoglycan polymerase that catalyzes glycan chain elongation using lipid-linked disaccharide-pentapeptide as the substrate. This chain is Monofunctional glycosyltransferase, found in Staphylococcus saprophyticus subsp. saprophyticus (strain ATCC 15305 / DSM 20229 / NCIMB 8711 / NCTC 7292 / S-41).